A 129-amino-acid chain; its full sequence is Putative transmembrane protein 10 (129 aa).

3 helical membrane-spanning segments follow: residues 3–23 (NFSYFSTIFSIALMSSNAFAG), 27–47 (LLVGFCPCIEINTLTLFLSSL), and 85–105 (SSVLSCFTSCFVIYFYPFFVF).

Its subcellular location is the host membrane. The sequence is that of Putative transmembrane protein 10 (SIFV0010) from Sulfolobus islandicus filamentous virus (isolate Iceland/Hveragerdi) (SIFV).